A 174-amino-acid chain; its full sequence is Protein SHI RELATED SEQUENCE 3 (174 aa).

Zn(2+) is bound by residues C9, C12, C20, C25, C29, and C36. Positions 9–36 (CEDCGNQAKKDCVYMRCRTCCKSKAFHC) form a DNA-binding region, zn(2)-C6 fungal-type; degenerate. The short motif at 110 to 113 (IGGH) is the Required for homo- and heterodimerization element.

It belongs to the SHI protein family.

Its subcellular location is the nucleus. Its function is as follows. Transcription activator that binds DNA on 5'-ACTCTAC-3' and promotes auxin homeostasis-regulating gene expression (e.g. YUC genes), as well as genes affecting stamen development, cell expansion and timing of flowering. Synergistically with other SHI-related proteins, regulates gynoecium, stamen and leaf development in a dose-dependent manner, controlling apical-basal patterning. Promotes style and stigma formation, and influences vascular development during gynoecium development. May also have a role in the formation and/or maintenance of the shoot apical meristem (SAM). This chain is Protein SHI RELATED SEQUENCE 3 (SRS3), found in Arabidopsis thaliana (Mouse-ear cress).